The following is a 514-amino-acid chain: Lysine--tRNA ligase (514 aa).

Mg(2+) is bound by residues glutamate 422 and glutamate 429.

Belongs to the class-II aminoacyl-tRNA synthetase family. As to quaternary structure, homodimer. The cofactor is Mg(2+).

The protein localises to the cytoplasm. The enzyme catalyses tRNA(Lys) + L-lysine + ATP = L-lysyl-tRNA(Lys) + AMP + diphosphate. This Psychrobacter arcticus (strain DSM 17307 / VKM B-2377 / 273-4) protein is Lysine--tRNA ligase.